Consider the following 419-residue polypeptide: Methionine aminopeptidase 2 (419 aa).

The tract at residues 1–69 is disordered; the sequence is MSTNSSNPNE…KITAIDNSYP (69 aa). Basic and acidic residues predominate over residues 11 to 29; the sequence is VMEKVQDLKIDDSKPKVDS. The segment covering 30 to 41 has biased composition (acidic residues); that stretch reads EEQPEAESDGES. Residues 48–61 show a composition bias toward basic residues; it reads KKKKKKKSKKKKKI. His172 contacts substrate. A divalent metal cation-binding residues include Asp192, Asp203, and His272. Residue His280 participates in substrate binding. Glu305 and Glu400 together coordinate a divalent metal cation.

This sequence belongs to the peptidase M24A family. Methionine aminopeptidase eukaryotic type 2 subfamily. Co(2+) serves as cofactor. Zn(2+) is required as a cofactor. It depends on Mn(2+) as a cofactor. The cofactor is Fe(2+).

It is found in the cytoplasm. It carries out the reaction Release of N-terminal amino acids, preferentially methionine, from peptides and arylamides.. Cotranslationally removes the N-terminal methionine from nascent proteins. The N-terminal methionine is often cleaved when the second residue in the primary sequence is small and uncharged (Met-Ala-, Cys, Gly, Pro, Ser, Thr, or Val). In Debaryomyces hansenii (strain ATCC 36239 / CBS 767 / BCRC 21394 / JCM 1990 / NBRC 0083 / IGC 2968) (Yeast), this protein is Methionine aminopeptidase 2.